A 359-amino-acid chain; its full sequence is MEKIFQNVEIKPLLIDFSNPFIKNAAKKLFQLEEQLPLVPVNVVMDFKGINRAAVHGLSRVLQDEIPNYMLDIKPGGYKIEDSTDLFMTEQFIRNRINFIPIYAENESLVFALRSLNNSCEVKTIYTRDLIQVAGPKLKYPIFNPTFEIGFLQPGKSLIIEDIYIKKGIGRKHAAFNLAVKTHFSHLDIEQYPTDKKEYMALSGYKQSSMTSDPRHHRLGLCFPAVPMPRINKAVRTYLKNACRVIIGRIQSIQKIYENFEEPQPELVLFSMDEEKTKAIITIKDETHTIGNLLKTCIYEMIPDISFVGYQCVPHKQEMVLTIIHKASQEDLITLLEKSIQNIIQMFQTLEKNIDELIA.

The protein in the N-terminal section; belongs to the archaeal RpoD/eukaryotic RPB3 RNA polymerase subunit family. In the C-terminal section; belongs to the archaeal RpoL/eukaryotic RPB11/RPC19 RNA polymerase subunit family. In terms of assembly, part of the viral DNA-directed RNA polymerase that consists of 8 polII-like subunits (RPB1, RPB2, RPB3, RPB5, RPB6, RPB7, RPB9, RPB10), a capping enzyme and a termination factor.

It is found in the host cytoplasm. The protein resides in the virion. Component of the DNA-directed RNA polymerase (RNAP) that catalyzes the transcription in the cytoplasm of viral DNA into RNA using the four ribonucleoside triphosphates as substrates. In Ornithodoros (relapsing fever ticks), this protein is DNA-directed RNA polymerase RPB3-11 homolog.